The chain runs to 88 residues: Acylphosphatase (88 aa).

The 86-residue stretch at Arg-3–Tyr-88 folds into the Acylphosphatase-like domain. Residues Arg-18 and Asn-36 contribute to the active site.

Belongs to the acylphosphatase family.

The enzyme catalyses an acyl phosphate + H2O = a carboxylate + phosphate + H(+). This chain is Acylphosphatase (acyP), found in Thermus thermophilus (strain ATCC BAA-163 / DSM 7039 / HB27).